The sequence spans 75 residues: Small ribosomal subunit protein bS18 (75 aa).

The protein belongs to the bacterial ribosomal protein bS18 family. In terms of assembly, part of the 30S ribosomal subunit. Forms a tight heterodimer with protein bS6.

Its function is as follows. Binds as a heterodimer with protein bS6 to the central domain of the 16S rRNA, where it helps stabilize the platform of the 30S subunit. The protein is Small ribosomal subunit protein bS18 of Sodalis glossinidius (strain morsitans).